Here is an 89-residue protein sequence, read N- to C-terminus: Small ribosomal subunit protein uS15 (89 aa).

It belongs to the universal ribosomal protein uS15 family. Part of the 30S ribosomal subunit. Forms a bridge to the 50S subunit in the 70S ribosome, contacting the 23S rRNA.

Its function is as follows. One of the primary rRNA binding proteins, it binds directly to 16S rRNA where it helps nucleate assembly of the platform of the 30S subunit by binding and bridging several RNA helices of the 16S rRNA. Forms an intersubunit bridge (bridge B4) with the 23S rRNA of the 50S subunit in the ribosome. This Shewanella baltica (strain OS185) protein is Small ribosomal subunit protein uS15.